The chain runs to 458 residues: Serine--tRNA ligase (458 aa).

Position 255 to 257 (255 to 257) interacts with L-serine; it reads TSE. Residues 286–288 and V302 contribute to the ATP site; that span reads RKE. Position 309 (E309) interacts with L-serine. Position 373 to 376 (373 to 376) interacts with ATP; that stretch reads ELVS. Residue T409 participates in L-serine binding.

This sequence belongs to the class-II aminoacyl-tRNA synthetase family. Type-1 seryl-tRNA synthetase subfamily. Homodimer. The tRNA molecule binds across the dimer.

The protein resides in the cytoplasm. The enzyme catalyses tRNA(Ser) + L-serine + ATP = L-seryl-tRNA(Ser) + AMP + diphosphate + H(+). The catalysed reaction is tRNA(Sec) + L-serine + ATP = L-seryl-tRNA(Sec) + AMP + diphosphate + H(+). It participates in aminoacyl-tRNA biosynthesis; selenocysteinyl-tRNA(Sec) biosynthesis; L-seryl-tRNA(Sec) from L-serine and tRNA(Sec): step 1/1. Its function is as follows. Catalyzes the attachment of serine to tRNA(Ser). Is also able to aminoacylate tRNA(Sec) with serine, to form the misacylated tRNA L-seryl-tRNA(Sec), which will be further converted into selenocysteinyl-tRNA(Sec). This is Serine--tRNA ligase from Ignicoccus hospitalis (strain KIN4/I / DSM 18386 / JCM 14125).